The primary structure comprises 473 residues: 3-isopropylmalate dehydratase large subunit (473 aa).

C348, C408, and C411 together coordinate [4Fe-4S] cluster. The disordered stretch occupies residues 421–440; it reads GDEASASSSNRNFIGRQGSK.

Belongs to the aconitase/IPM isomerase family. LeuC type 1 subfamily. As to quaternary structure, heterodimer of LeuC and LeuD. The cofactor is [4Fe-4S] cluster.

The enzyme catalyses (2R,3S)-3-isopropylmalate = (2S)-2-isopropylmalate. Its pathway is amino-acid biosynthesis; L-leucine biosynthesis; L-leucine from 3-methyl-2-oxobutanoate: step 2/4. Functionally, catalyzes the isomerization between 2-isopropylmalate and 3-isopropylmalate, via the formation of 2-isopropylmaleate. The sequence is that of 3-isopropylmalate dehydratase large subunit from Haloferax volcanii (strain ATCC 29605 / DSM 3757 / JCM 8879 / NBRC 14742 / NCIMB 2012 / VKM B-1768 / DS2) (Halobacterium volcanii).